Reading from the N-terminus, the 827-residue chain is DNA-binding protein RAP1 (827 aa).

Disordered regions lie at residues 29–128, 221–268, and 308–339; these read SAAV…PLSN, LQEE…KVMV, and QKDTSNNNNSNVNDEDNDLLTQDNNPQTADEG. A compositionally biased stretch (polar residues) spans 44–57; that stretch reads ANQNEENTGATAAE. Residues 58-72 are compositionally biased toward basic and acidic residues; that stretch reads TSEKVDQTEVEKKDD. Over residues 92-107 the composition is skewed to polar residues; the sequence is ATANIASTSGASVTEP. Residues 121-208 form the BRCT domain; it reads VSGPPLSNMK…SLLNMENYLV (88 aa). Residues 227–237 are compositionally biased toward low complexity; it reads SNGVDNSNSNS. Residues 238–247 show a composition bias toward basic and acidic residues; sequence DNKDSIRPKT. Over residues 249 to 260 the composition is skewed to polar residues; it reads IISTNTNGATED. The segment covering 310–319 has biased composition (low complexity); it reads DTSNNNNSNV. Residues 326-339 show a composition bias toward polar residues; that stretch reads LLTQDNNPQTADEG. The region spanning 355 to 415 is the HTH myb-type domain; sequence LPSHNKASFT…RFRVYLSKRL (61 aa). The segment at residues 388 to 411 is a DNA-binding region (H-T-H motif); sequence YDEISHYVPNHTGNSIRHRFRVYL. At Thr486 the chain carries Phosphothreonine. The tract at residues 567-613 is disordered; that stretch reads QNREPEPMKNLTNRPKRPGVPTPGNYNSAAKRARNYSSQRNVQPTAN. A compositionally biased stretch (polar residues) spans 601 to 611; sequence NYSSQRNVQPT. Residues 630–695 form an activation domain region; the sequence is SYAIPENELL…IDPDTISFPP (66 aa). A Phosphoserine modification is found at Ser731.

Belongs to the RAP1 family. In terms of assembly, interacts (via C-terminus) with RIF1. Interacts (via C-terminus) with SIR3. Interacts (via C-terminus) with SIR4. Interacts with a GCR1 homodimer.

The protein localises to the nucleus. The protein resides in the chromosome. Its subcellular location is the telomere. Essential regulatory protein in yeast whose DNA-binding sites are found at three types of chromosomal elements: promoters, silencers, and telomeres. RAP1 is also involved in the regulation of telomere structure, where its binding sites are found within the terminal poly[C(1-3)A] sequences. The opposite regulatory functions of RAP1 are not intrinsic to its binding sites but, instead, result from interactions with different factors at promoters and silencers. RAP1 mediates repression of the HM loci and telomeres by recruiting the SIR complex. May also target the binding of RIF1 and RIF2 to silencers and telomeres. Forms with GCR1 a transcriptional activation complex that is required for expression of glycolytic and ribosomal gene. The sequence is that of DNA-binding protein RAP1 (RAP1) from Saccharomyces cerevisiae (strain ATCC 204508 / S288c) (Baker's yeast).